We begin with the raw amino-acid sequence, 1145 residues long: Protein STU1 (1145 aa).

2 HEAT repeats span residues 96 to 134 (TLPL…EKYV) and 168 to 206 (YVPV…KSDL). Disordered stretches follow at residues 226–271 (ELIP…GIDT), 510–793 (LLNK…VVDP), and 816–839 (PEPV…PAAS). Over residues 229–239 (PTSSRPETPAA) the composition is skewed to low complexity. The segment covering 535 to 545 (SKSTMGTSKPS) has biased composition (polar residues). Composition is skewed to low complexity over residues 580 to 594 (TTTT…SGAR), 663 to 676 (ASHA…SPSS), and 696 to 708 (QSQS…SSPS).

It belongs to the CLASP family. In terms of assembly, interacts with microtubules.

It is found in the cytoplasm. The protein localises to the cytoskeleton. It localises to the nucleus. The protein resides in the spindle. Its function is as follows. Microtubule binding protein that promotes the stabilization of dynamic microtubules. Required for mitotic spindle formation. This Gibberella zeae (strain ATCC MYA-4620 / CBS 123657 / FGSC 9075 / NRRL 31084 / PH-1) (Wheat head blight fungus) protein is Protein STU1 (STU1).